Consider the following 357-residue polypeptide: Sorbitol dehydrogenase 1 (357 aa).

C43 provides a ligand contact to Zn(2+). Y49 serves as a coordination point for substrate. Residues H68 and E69 each contribute to the Zn(2+) site. Position 154 (E154) interacts with substrate. Residues D202, K207, 275–277 (VGM), and 299–301 (CFR) each bind NAD(+). Substrate-binding residues include R301 and Y302.

It belongs to the zinc-containing alcohol dehydrogenase family. Homotetramer. It depends on Zn(2+) as a cofactor.

The enzyme catalyses keto-D-fructose + NADH + H(+) = D-sorbitol + NAD(+). It carries out the reaction xylitol + NAD(+) = D-xylulose + NADH + H(+). In terms of biological role, polyol dehydrogenase that catalyzes the reversible NAD(+)-dependent oxidation of various sugar alcohols. Is active with D-sorbitol (D-glucitol) and xylitol as substrates, leading to the C2-oxidized product D-fructose and D-xylulose, respectively. Is likely involved in the utilization of D-sorbitol as a sole carbon source for growth. Has no activity on mannitol and primary alcohols such as ethanol. The chain is Sorbitol dehydrogenase 1 (SOR1) from Saccharomyces cerevisiae (strain ATCC 204508 / S288c) (Baker's yeast).